The primary structure comprises 214 residues: Ribonuclease S-2 (214 aa).

The signal sequence occupies residues 1-22; it reads MSKSQLTSVFFILLCALSPIYG. Residues C38 and C43 are joined by a disulfide bond. The N-linked (GlcNAc...) asparagine glycan is linked to N49. H53 serves as the catalytic Proton donor. RNA is bound at residue H53. N-linked (GlcNAc...) asparagine glycosylation occurs at N59. Cysteines 67 and 116 form a disulfide. RNA is bound by residues 91-92, K94, and F105; that span reads DL. Residue E109 is part of the active site. Residue 112–113 coordinates RNA; that stretch reads KH. Residue H113 is the Proton acceptor of the active site. N160 carries an N-linked (GlcNAc...) asparagine glycan. 2 disulfides stabilise this stretch: C175–C204 and C187–C198.

It belongs to the RNase T2 family.

The protein localises to the secreted. Its subcellular location is the extracellular space. The catalysed reaction is a ribonucleotidyl-ribonucleotide-RNA + H2O = a 3'-end 3'-phospho-ribonucleotide-RNA + a 5'-end dephospho-ribonucleoside-RNA + H(+). Its function is as follows. Self-incompatibility (SI) is the inherited ability of a flowering plant to prevent self-fertilization by discriminating between self and non-self pollen during pollination. In many species of the Solanaceae, self-incompatibility is controlled by the single, multiallelic locus S. This stylar glycoprotein is associated with expression of self-incompatibility in potato. The sequence is that of Ribonuclease S-2 (S-2) from Nicotiana alata (Winged tobacco).